Reading from the N-terminus, the 437-residue chain is Serine--tRNA ligase (437 aa).

Position 240–242 (240–242 (TAE)) interacts with L-serine. 271-273 (RAE) serves as a coordination point for ATP. An L-serine-binding site is contributed by Glu-294. 358-361 (EISS) is an ATP binding site. Ser-394 provides a ligand contact to L-serine.

This sequence belongs to the class-II aminoacyl-tRNA synthetase family. Type-1 seryl-tRNA synthetase subfamily. Homodimer. The tRNA molecule binds across the dimer.

Its subcellular location is the cytoplasm. The catalysed reaction is tRNA(Ser) + L-serine + ATP = L-seryl-tRNA(Ser) + AMP + diphosphate + H(+). It catalyses the reaction tRNA(Sec) + L-serine + ATP = L-seryl-tRNA(Sec) + AMP + diphosphate + H(+). The protein operates within aminoacyl-tRNA biosynthesis; selenocysteinyl-tRNA(Sec) biosynthesis; L-seryl-tRNA(Sec) from L-serine and tRNA(Sec): step 1/1. In terms of biological role, catalyzes the attachment of serine to tRNA(Ser). Is also able to aminoacylate tRNA(Sec) with serine, to form the misacylated tRNA L-seryl-tRNA(Sec), which will be further converted into selenocysteinyl-tRNA(Sec). The sequence is that of Serine--tRNA ligase from Methylobacterium nodulans (strain LMG 21967 / CNCM I-2342 / ORS 2060).